The following is a 436-amino-acid chain: Chorismate synthase, chloroplastic (436 aa).

The tract at residues 1–24 is disordered; the sequence is MASSSLTSKSILGSTKLGSSSLPS. A chloroplast-targeting transit peptide spans 1-50; sequence MASSSLTSKSILGSTKLGSSSLPSELRRLSSPAVQISLRTQTRKNFQIQA.

This sequence belongs to the chorismate synthase family. Homotetramer. Requires FMNH2 as cofactor.

The protein resides in the plastid. It is found in the chloroplast. It catalyses the reaction 5-O-(1-carboxyvinyl)-3-phosphoshikimate = chorismate + phosphate. Its pathway is metabolic intermediate biosynthesis; chorismate biosynthesis; chorismate from D-erythrose 4-phosphate and phosphoenolpyruvate: step 7/7. Its function is as follows. Catalyzes the last common step of the biosynthesis of aromatic amino acids, produced via the shikimic acid pathway. This Arabidopsis thaliana (Mouse-ear cress) protein is Chorismate synthase, chloroplastic (EMB1144).